The sequence spans 78 residues: MHQNSVTLDSAGAITRYFAKANLHTQQETLGEIVTEILKDGRNLSRKSLCAKLLCRLEHATGEEEQKHYNALIGLLFE.

Its function is as follows. Probably a connector protein for RcsB/C regulation of biofilm formation, providing additional signal input into the two-component signaling pathway. Partially antagonizes the activities of YmgA and AriR, proteins that, via the Rcs phosphorelay, promote the synthesis of colanic acid, an exopolysaccharide and matrix component. The sequence is that of Probable two-component-system connector protein YcgZ (ycgZ) from Escherichia coli (strain K12).